The following is a 175-amino-acid chain: Putative transmembrane protein ORF175 (175 aa).

Helical transmembrane passes span 14 to 34, 58 to 78, 101 to 121, and 142 to 162; these read LGIV…GSFM, VLSN…AIAF, IVVA…FALF, and ITPF…VLSI.

Its subcellular location is the host membrane. This chain is Putative transmembrane protein ORF175, found in Acidianus two-tailed virus (ATV).